Reading from the N-terminus, the 297-residue chain is MNADLTVVSPQIQAQILAEALPYIRKFHGKTIVVKYGGNAMTEERLKHSFARDVILLKLVGMNPVVVHGGGPQIDNALKKIGKQGTFIQGMRITDEETMEVVEWVLGGEVQQDIVMLINHYGGQAVGLTGKDGGLIRARKMNMPDRENPGKFLDIGFVGDIEAINPAVVKALQDDAFIPIISPIGFGDDGQAYNINADVVAGKIAEILRAEKLIMMTNIAGVQDKQGNLLTDLSAREIDEMFEDGTISGGMLPKISSALDAAKSGVNTVHIIDGRIEHSLLLEVLTEQAFGTMIRSH.

Substrate-binding positions include 70-71, Arg-92, and Asn-194; that span reads GG.

This sequence belongs to the acetylglutamate kinase family. ArgB subfamily.

Its subcellular location is the cytoplasm. The catalysed reaction is N-acetyl-L-glutamate + ATP = N-acetyl-L-glutamyl 5-phosphate + ADP. The protein operates within amino-acid biosynthesis; L-arginine biosynthesis; N(2)-acetyl-L-ornithine from L-glutamate: step 2/4. Catalyzes the ATP-dependent phosphorylation of N-acetyl-L-glutamate. The polypeptide is Acetylglutamate kinase (Herminiimonas arsenicoxydans).